A 336-amino-acid polypeptide reads, in one-letter code: Nucleoid-associated protein ECA2747 (336 aa).

The interval 317-336 is disordered; sequence KGTPPNLRDQLQRRTSGGKQ.

This sequence belongs to the YejK family.

Its subcellular location is the cytoplasm. It localises to the nucleoid. The polypeptide is Nucleoid-associated protein ECA2747 (Pectobacterium atrosepticum (strain SCRI 1043 / ATCC BAA-672) (Erwinia carotovora subsp. atroseptica)).